Reading from the N-terminus, the 431-residue chain is Adenylosuccinate synthetase (431 aa).

GTP-binding positions include 13–19 (GDEGKGK) and 41–43 (GHT). Asp14 serves as the catalytic Proton acceptor. Mg(2+)-binding residues include Asp14 and Gly41. IMP-binding positions include 14-17 (DEGK), 39-42 (NAGH), Thr130, Arg144, Gln225, Thr240, and Arg304. The Proton donor role is filled by His42. 300-306 (ATTGRKR) contacts substrate. GTP contacts are provided by residues Arg306, 332–334 (KLD), and 415–417 (STG).

This sequence belongs to the adenylosuccinate synthetase family. In terms of assembly, homodimer. The cofactor is Mg(2+).

It localises to the cytoplasm. The catalysed reaction is IMP + L-aspartate + GTP = N(6)-(1,2-dicarboxyethyl)-AMP + GDP + phosphate + 2 H(+). The protein operates within purine metabolism; AMP biosynthesis via de novo pathway; AMP from IMP: step 1/2. Its function is as follows. Plays an important role in the de novo pathway of purine nucleotide biosynthesis. Catalyzes the first committed step in the biosynthesis of AMP from IMP. The sequence is that of Adenylosuccinate synthetase from Shewanella frigidimarina (strain NCIMB 400).